Reading from the N-terminus, the 151-residue chain is Deoxyuridine 5'-triphosphate nucleotidohydrolase (151 aa).

Substrate-binding positions include 70-72 (RSG), N83, 87-89 (LID), and M97.

Belongs to the dUTPase family. In terms of assembly, homotrimer. Requires Mg(2+) as cofactor.

The enzyme catalyses dUTP + H2O = dUMP + diphosphate + H(+). It functions in the pathway pyrimidine metabolism; dUMP biosynthesis; dUMP from dCTP (dUTP route): step 2/2. Its function is as follows. This enzyme is involved in nucleotide metabolism: it produces dUMP, the immediate precursor of thymidine nucleotides and it decreases the intracellular concentration of dUTP so that uracil cannot be incorporated into DNA. The protein is Deoxyuridine 5'-triphosphate nucleotidohydrolase of Escherichia coli O7:K1 (strain IAI39 / ExPEC).